The primary structure comprises 1328 residues: ABC transporter G family member 2 (1328 aa).

The region spanning 53–299 (VTARNLSMSI…FEGLGFKLPK (247 aa)) is the ABC transporter 1 domain. 91-98 (GSPGCGKT) is a binding site for ATP. Residues 388 to 665 (ISSQVAVRMR…FGMYFFLKNV (278 aa)) form the ABC transmembrane type-2 1 domain. Helical transmembrane passes span 398 to 418 (IIKSIVMGLILGSLFYGLDLN), 428 to 448 (LIFFSLLFIVFSGMGAIAILF), 477 to 497 (IPIALLETVVFCVLVYWMCGL), 504 to 524 (FIYFLLMNFVGDLAFQSFFKM), 534 to 554 (LASVIAPAALAPFILFSGFMA), 559 to 579 (IGGWWIWIYWISPIKYAFEGL), and 642 to 662 (IDLLIVFAFGALFSFGMYFFL). The segment at 670-691 (RASDPKNDKRSKKASKRSKKIK) is disordered. Residues 678–689 (KRSKKASKRSKK) are compositionally biased toward basic residues. The ABC transporter 2 domain occupies 721 to 960 (VYEVDVKKDG…DLLGYFENHG (240 aa)). 755–762 (GPSGAGKS) contacts ATP. The region spanning 1049-1286 (VRRVQNIRTR…PICPITNGNQ (238 aa)) is the ABC transmembrane type-2 2 domain. Helical transmembrane passes span 1059-1076 (LMRSLFLGVVLGTLFVRM), 1087-1107 (VSILFFSLMFGGMSGMSSIPI), 1128-1148 (IYLFTFIVTDLPWVFLSAIIY), 1172-1192 (FISFTTYFNFSMLAMVFATVL), 1197-1217 (IAHALGGVALSISSLFAGFMI), and 1303-1323 (AVIFGYSVFFFICIFIALKFI).

It belongs to the ABC transporter superfamily. ABCG family. PDR (TC 3.A.1.205) subfamily.

The protein localises to the endosome membrane. Its function is as follows. Required for endocytosis and endosomal pH regulation. This Dictyostelium discoideum (Social amoeba) protein is ABC transporter G family member 2 (abcG2).